Here is a 157-residue protein sequence, read N- to C-terminus: Crossover junction endodeoxyribonuclease RuvC (157 aa).

Active-site residues include Asp7, Glu66, and Asp139. Asp7, Glu66, and Asp139 together coordinate Mg(2+).

The protein belongs to the RuvC family. As to quaternary structure, homodimer which binds Holliday junction (HJ) DNA. The HJ becomes 2-fold symmetrical on binding to RuvC with unstacked arms; it has a different conformation from HJ DNA in complex with RuvA. In the full resolvosome a probable DNA-RuvA(4)-RuvB(12)-RuvC(2) complex forms which resolves the HJ. The cofactor is Mg(2+).

It localises to the cytoplasm. It carries out the reaction Endonucleolytic cleavage at a junction such as a reciprocal single-stranded crossover between two homologous DNA duplexes (Holliday junction).. The RuvA-RuvB-RuvC complex processes Holliday junction (HJ) DNA during genetic recombination and DNA repair. Endonuclease that resolves HJ intermediates. Cleaves cruciform DNA by making single-stranded nicks across the HJ at symmetrical positions within the homologous arms, yielding a 5'-phosphate and a 3'-hydroxyl group; requires a central core of homology in the junction. The consensus cleavage sequence is 5'-(A/T)TT(C/G)-3'. Cleavage occurs on the 3'-side of the TT dinucleotide at the point of strand exchange. HJ branch migration catalyzed by RuvA-RuvB allows RuvC to scan DNA until it finds its consensus sequence, where it cleaves and resolves the cruciform DNA. In Helicobacter pylori (strain J99 / ATCC 700824) (Campylobacter pylori J99), this protein is Crossover junction endodeoxyribonuclease RuvC.